The primary structure comprises 241 residues: Tumor necrosis factor receptor superfamily member 18 (241 aa).

An N-terminal signal peptide occupies residues 1 to 25 (MAQHGAMGAFRALCGLALLCALSLG). Residues 26 to 162 (QRPTGGPGCG…CVPGSPPAEP (137 aa)) are Extracellular-facing. Disulfide bonds link C34-C49, C74-C86, C81-C94, C115-C134, and C128-C153. TNFR-Cys repeat units lie at residues 34–72 (CGPGRLLLGTGTDARCCRVHTTRCCRDYPGEECCSEWDC), 74–112 (CVQPEFHCGDPCCTTCRHHPCPPGQGVQSQGKFSFGFQC), and 115–153 (CASGTFSGGHEGHCKPWTDCTQFGFLTVFPGNKTHNAVC). N-linked (GlcNAc...) asparagine glycosylation occurs at N146. A helical transmembrane segment spans residues 163 to 183 (LGWLTVVLLAVAACVLLLTSA). The Cytoplasmic segment spans residues 184-241 (QLGLHIWQLRSQCMWPRETQLLLEVPPSTEDARSCQFPEEERGERSAEEKGRLGDLWV). Positions 214–241 (DARSCQFPEEERGERSAEEKGRLGDLWV) are disordered. The span at 222-241 (EEERGERSAEEKGRLGDLWV) shows a compositional bias: basic and acidic residues.

As to quaternary structure, binds to TRAF1, TRAF2, and TRAF3, but not TRAF5 and TRAF6. Binds through its C-terminus to SIVA1/SIVA. As to expression, expressed in lymph node, peripheral blood leukocytes and weakly in spleen.

The protein resides in the cell membrane. It is found in the secreted. Receptor for TNFSF18. Seems to be involved in interactions between activated T-lymphocytes and endothelial cells and in the regulation of T-cell receptor-mediated cell death. Mediated NF-kappa-B activation via the TRAF2/NIK pathway. The sequence is that of Tumor necrosis factor receptor superfamily member 18 (TNFRSF18) from Homo sapiens (Human).